The primary structure comprises 178 residues: Nascent polypeptide-associated complex subunit alpha (178 aa).

The NAC-A/B domain maps to 16-80 (PKNEKKAREL…AKVDDMNQRI (65 aa)). Residues 82–100 (EAQAQQAQQEALQKAAADA) show a composition bias toward low complexity. A disordered region spans residues 82-145 (EAQAQQAQQE…DETGLDPKDI (64 aa)). The segment covering 101 to 126 (GKTEDKSPEAITADLEKASLGDKKAE) has biased composition (basic and acidic residues). A compositionally biased stretch (acidic residues) spans 127 to 139 (DEEEDEGEIDETG). The UBA domain maps to 140–178 (LDPKDIEIVVEQTQVSRAKAVKALRNHDGDMVNAIMDLS).

Belongs to the NAC-alpha family. In terms of assembly, part of the nascent polypeptide-associated complex (NAC), consisting of EGD2 and EGD1. NAC associates with ribosomes via EGD1.

It is found in the cytoplasm. Its subcellular location is the nucleus. In terms of biological role, component of the nascent polypeptide-associated complex (NAC), a dynamic component of the ribosomal exit tunnel, protecting the emerging polypeptides from interaction with other cytoplasmic proteins to ensure appropriate nascent protein targeting. The NAC complex also promotes mitochondrial protein import by enhancing productive ribosome interactions with the outer mitochondrial membrane and blocks the inappropriate interaction of ribosomes translating non-secretory nascent polypeptides with translocation sites in the membrane of the endoplasmic reticulum. EGD2 may also be involved in transcription regulation. In Candida albicans (strain SC5314 / ATCC MYA-2876) (Yeast), this protein is Nascent polypeptide-associated complex subunit alpha (EGD2).